Reading from the N-terminus, the 388-residue chain is Succinyl-diaminopimelate desuccinylase (388 aa).

His-75 contacts Zn(2+). Residue Asp-77 is part of the active site. Position 108 (Asp-108) interacts with Zn(2+). The Proton acceptor role is filled by Glu-142. Residues Glu-143, Glu-171, and His-361 each contribute to the Zn(2+) site.

The protein belongs to the peptidase M20A family. DapE subfamily. In terms of assembly, homodimer. The cofactor is Zn(2+). Requires Co(2+) as cofactor.

The enzyme catalyses N-succinyl-(2S,6S)-2,6-diaminopimelate + H2O = (2S,6S)-2,6-diaminopimelate + succinate. The protein operates within amino-acid biosynthesis; L-lysine biosynthesis via DAP pathway; LL-2,6-diaminopimelate from (S)-tetrahydrodipicolinate (succinylase route): step 3/3. Functionally, catalyzes the hydrolysis of N-succinyl-L,L-diaminopimelic acid (SDAP), forming succinate and LL-2,6-diaminopimelate (DAP), an intermediate involved in the bacterial biosynthesis of lysine and meso-diaminopimelic acid, an essential component of bacterial cell walls. The chain is Succinyl-diaminopimelate desuccinylase from Methylocella silvestris (strain DSM 15510 / CIP 108128 / LMG 27833 / NCIMB 13906 / BL2).